Here is a 102-residue protein sequence, read N- to C-terminus: Putative defensin-like protein 298 (102 aa).

The first 29 residues, 1–29 (MSASKATMLILFALFLSDILLVSIPRAEA), serve as a signal peptide directing secretion. 6 cysteine pairs are disulfide-bonded: Cys-35-Cys-53, Cys-41-Cys-58, Cys-46-Cys-60, Cys-74-Cys-93, Cys-80-Cys-98, and Cys-86-Cys-100.

Belongs to the DEFL family.

It is found in the secreted. The protein is Putative defensin-like protein 298 of Arabidopsis thaliana (Mouse-ear cress).